The following is a 416-amino-acid chain: NADH-quinone oxidoreductase subunit D (416 aa).

The protein belongs to the complex I 49 kDa subunit family. NDH-1 is composed of 14 different subunits. Subunits NuoB, C, D, E, F, and G constitute the peripheral sector of the complex.

It is found in the cell inner membrane. The enzyme catalyses a quinone + NADH + 5 H(+)(in) = a quinol + NAD(+) + 4 H(+)(out). NDH-1 shuttles electrons from NADH, via FMN and iron-sulfur (Fe-S) centers, to quinones in the respiratory chain. The immediate electron acceptor for the enzyme in this species is believed to be ubiquinone. Couples the redox reaction to proton translocation (for every two electrons transferred, four hydrogen ions are translocated across the cytoplasmic membrane), and thus conserves the redox energy in a proton gradient. The chain is NADH-quinone oxidoreductase subunit D from Rhodopseudomonas palustris (strain BisB5).